The following is a 396-amino-acid chain: 1-deoxy-D-xylulose 5-phosphate reductoisomerase (396 aa).

T15, G16, S17, I18, G41, and N129 together coordinate NADPH. K130 lines the 1-deoxy-D-xylulose 5-phosphate pocket. E131 is a binding site for NADPH. D155 provides a ligand contact to Mn(2+). Residues S156, E157, S182, and H205 each coordinate 1-deoxy-D-xylulose 5-phosphate. Position 157 (E157) interacts with Mn(2+). G211 contributes to the NADPH binding site. Residues S218, N223, K224, and E227 each coordinate 1-deoxy-D-xylulose 5-phosphate. E227 provides a ligand contact to Mn(2+).

The protein belongs to the DXR family. Requires Mg(2+) as cofactor. The cofactor is Mn(2+).

It catalyses the reaction 2-C-methyl-D-erythritol 4-phosphate + NADP(+) = 1-deoxy-D-xylulose 5-phosphate + NADPH + H(+). Its pathway is isoprenoid biosynthesis; isopentenyl diphosphate biosynthesis via DXP pathway; isopentenyl diphosphate from 1-deoxy-D-xylulose 5-phosphate: step 1/6. Its function is as follows. Catalyzes the NADPH-dependent rearrangement and reduction of 1-deoxy-D-xylulose-5-phosphate (DXP) to 2-C-methyl-D-erythritol 4-phosphate (MEP). In Xanthomonas euvesicatoria pv. vesicatoria (strain 85-10) (Xanthomonas campestris pv. vesicatoria), this protein is 1-deoxy-D-xylulose 5-phosphate reductoisomerase.